Consider the following 1547-residue polypeptide: DNA topoisomerase 2 (1547 aa).

Residues 8 to 30 (FNKMSSPKQNGTGEPAPAKGQKG) are disordered. The span at 9 to 19 (NKMSSPKQNGT) shows a compositional bias: polar residues. Residues N99, N128, 156–158 (SSN), and 169–176 (GRNGYGAK) each bind ATP. An interaction with DNA region spans residues 351-353 (KKK). 385–387 (QTK) provides a ligand contact to ATP. The Toprim domain occupies 463–580 (CTLILTEGDS…ELLKLPFLEE (118 aa)). Residues E469, D549, and D551 each coordinate Mg(2+). The region spanning 723–1192 (IPSMIDGLKP…TAPMLWREDL (470 aa)) is the Topo IIA-type catalytic domain. Y813 serves as the catalytic O-(5'-phospho-DNA)-tyrosine intermediate. The tract at residues 996–1005 (KLQTTISMTC) is interaction with DNA. Disordered stretches follow at residues 1107–1134 (TALE…VDPD), 1209–1249 (EELN…ISDD), 1261–1423 (KTRK…MDSD), and 1459–1547 (RQRR…SLSD). The segment covering 1109–1123 (LEDDDAQESEEEEPE) has biased composition (acidic residues). Over residues 1124 to 1134 (PDPKGKPVDPD) the composition is skewed to basic and acidic residues. Positions 1216–1228 (KTSKAMAGKKNRK) are enriched in basic residues. 2 stretches are compositionally biased toward basic and acidic residues: residues 1238–1249 (NGRRVEPKISDD) and 1294–1315 (EKPE…DGLK). A compositionally biased stretch (low complexity) spans 1331–1344 (TFSGSSSGEMSASD). A compositionally biased stretch (acidic residues) spans 1373-1383 (DDSGSDSEPEL). 2 stretches are compositionally biased toward basic and acidic residues: residues 1384-1394 (LDNKIDSDHEA) and 1459-1488 (RQRR…DEKK). The segment covering 1513–1528 (KGKKKTAANPKKKAKK) has biased composition (basic residues). Residues 1537 to 1547 (DFNISDSSLSD) are compositionally biased toward polar residues.

The protein belongs to the type II topoisomerase family. As to quaternary structure, homodimer. Requires Mg(2+) as cofactor. Mn(2+) is required as a cofactor. The cofactor is Ca(2+).

Its subcellular location is the nucleus. It catalyses the reaction ATP-dependent breakage, passage and rejoining of double-stranded DNA.. In terms of biological role, control of topological states of DNA by transient breakage and subsequent rejoining of DNA strands. Topoisomerase II makes double-strand breaks. This Bombyx mori (Silk moth) protein is DNA topoisomerase 2 (TOP2).